We begin with the raw amino-acid sequence, 217 residues long: Vesicle transport through interaction with t-SNAREs homolog 1A (217 aa).

Over 1 to 192 (MDVFERTEQN…TGIARRLATN (192 aa)) the chain is Cytoplasmic. Residues 36–97 (AVREVENDID…AQLQSSNQTN (62 aa)) are a coiled coil. The segment at 90–109 (LQSSNQTNSNPWSNAPDDYQ) is disordered. Positions 123–185 (SNMLDSTSDR…KSARKIMTGI (63 aa)) constitute a t-SNARE coiled-coil homology domain. Residues 193–213 (KVILSIIILLLMGIIALIICL) traverse the membrane as a helical; Anchor for type IV membrane protein segment. Over 214 to 217 (KWLR) the chain is Vesicular.

The protein belongs to the VTI1 family. Component of the SNARE complex composed of syn7A, syn8A, vamp7A and vti1A.

The protein localises to the membrane. It localises to the cytoplasmic vesicle. Its subcellular location is the secretory vesicle membrane. The protein resides in the clathrin-coated vesicle membrane. It is found in the endosome membrane. The protein localises to the endoplasmic reticulum membrane. Functionally, V-SNARE that mediates vesicle transport pathways through interactions with t-SNAREs on the target membrane. These interactions are proposed to mediate aspects of the specificity of vesicle trafficking and to promote fusion of the lipid bilayers. The chain is Vesicle transport through interaction with t-SNAREs homolog 1A from Dictyostelium discoideum (Social amoeba).